A 257-amino-acid polypeptide reads, in one-letter code: Tryptophan synthase alpha chain (257 aa).

Active-site proton acceptor residues include Glu-47 and Asp-58.

It belongs to the TrpA family. Tetramer of two alpha and two beta chains.

The catalysed reaction is (1S,2R)-1-C-(indol-3-yl)glycerol 3-phosphate + L-serine = D-glyceraldehyde 3-phosphate + L-tryptophan + H2O. Its pathway is amino-acid biosynthesis; L-tryptophan biosynthesis; L-tryptophan from chorismate: step 5/5. Its function is as follows. The alpha subunit is responsible for the aldol cleavage of indoleglycerol phosphate to indole and glyceraldehyde 3-phosphate. The sequence is that of Tryptophan synthase alpha chain from Listeria innocua serovar 6a (strain ATCC BAA-680 / CLIP 11262).